We begin with the raw amino-acid sequence, 168 residues long: Gastrula zinc finger protein XlCGF7.1 (168 aa).

6 C2H2-type zinc fingers span residues 6-28, 34-56, 62-84, 90-112, 118-140, and 146-168; these read FTCTECGKGFSDKSNLRSHQRTH, FTCTECGKSFSQKIGLHNHLKCH, FMCTECGKSFSNKSNLHTHRKIH, YICTECGKTFPRKKNLQSHQTVH, FTCSECGKCFSQKKNLHTHQKIH, and FKCNECGQAFLRKRNLLSHERIH.

This sequence belongs to the krueppel C2H2-type zinc-finger protein family.

Its subcellular location is the nucleus. May be involved in transcriptional regulation. The polypeptide is Gastrula zinc finger protein XlCGF7.1 (Xenopus laevis (African clawed frog)).